Consider the following 261-residue polypeptide: Indole-3-glycerol phosphate synthase (261 aa).

It belongs to the TrpC family.

The catalysed reaction is 1-(2-carboxyphenylamino)-1-deoxy-D-ribulose 5-phosphate + H(+) = (1S,2R)-1-C-(indol-3-yl)glycerol 3-phosphate + CO2 + H2O. The protein operates within amino-acid biosynthesis; L-tryptophan biosynthesis; L-tryptophan from chorismate: step 4/5. This Burkholderia vietnamiensis (strain G4 / LMG 22486) (Burkholderia cepacia (strain R1808)) protein is Indole-3-glycerol phosphate synthase.